Reading from the N-terminus, the 196-residue chain is Vacuolar iron transporter homolog 2 (196 aa).

At 1–31 (MDQSGSNTNMDIEKESTTFDYSKRSQWLRAA) the chain is on the cytoplasmic side. Residues 32–52 (VLGANDGLVSTASLMMGVGAV) traverse the membrane as a helical segment. Residues 53–59 (KHDVKAM) lie on the Vacuolar side of the membrane. Residues 60-80 (ILSGFAGMVAGACSMAIGEFV) form a helical membrane-spanning segment. Residues 81 to 112 (SVYSQYDIEVAQMERDSVEIEKEKLPSPMQAA) are Cytoplasmic-facing. The chain crosses the membrane as a helical span at residues 113-133 (AASALAFSAGAIVPLLAAAFV). Residues 134-139 (KEYKMR) lie on the Vacuolar side of the membrane. Residues 140–160 (IISVVVAVTVALMVFGWLGAA) traverse the membrane as a helical segment. Residues 161–172 (LGKAPAVRSSAR) are Cytoplasmic-facing. A helical transmembrane segment spans residues 173-193 (VLFGGWLAMAVTFGLTKLIGL). Residues 194 to 196 (YGL) lie on the Vacuolar side of the membrane.

The protein belongs to the CCC1 family. Expressed in roots, leaves and inflorescences.

Its subcellular location is the vacuole membrane. It catalyses the reaction Fe(2+)(in) = Fe(2+)(out). In terms of biological role, vacuolar iron transporter involved in the transfer of iron ions from the cytosol to the vacuole for intracellular iron storage. Involved in regulation of cellular iron homeostasis. Vacuolar iron storage is required for seed embryo and seedling development. This Arabidopsis thaliana (Mouse-ear cress) protein is Vacuolar iron transporter homolog 2.